The following is a 317-amino-acid chain: Fe-S cluster assembly protein DRE2 (317 aa).

The interval 1 to 131 (MERMLFLSPP…KPNFGAQDTV (131 aa)) is N-terminal SAM-like domain. The segment at 132-209 (PLKLGKKKKA…EEALMDEEDM (78 aa)) is linker. Cysteine 219, cysteine 230, cysteine 233, and cysteine 235 together coordinate [2Fe-2S] cluster. The interval 219 to 235 (CRPKAGKRRRACKDCTC) is fe-S binding site A. [4Fe-4S] cluster is bound by residues cysteine 280, cysteine 283, cysteine 291, and cysteine 294. 2 consecutive short sequence motifs (cx2C motif) follow at residues 280 to 283 (CGNC) and 291 to 294 (CDGC). Residues 280 to 294 (CGNCALGDAFRCDGC) are fe-S binding site B.

The protein belongs to the anamorsin family. As to quaternary structure, monomer. Interacts with TAH18. Interacts with MIA40. [2Fe-2S] cluster serves as cofactor. Requires [4Fe-4S] cluster as cofactor.

The protein localises to the cytoplasm. Its subcellular location is the mitochondrion intermembrane space. In terms of biological role, component of the cytosolic iron-sulfur (Fe-S) protein assembly (CIA) machinery required for the maturation of extramitochondrial Fe-S proteins. Part of an electron transfer chain functioning in an early step of cytosolic Fe-S biogenesis, facilitating the de novo assembly of a [4Fe-4S] cluster on the scaffold complex CFD1-NBP35. Electrons are transferred to DRE2 from NADPH via the FAD- and FMN-containing protein TAH18. TAH18-DRE2 are also required for the assembly of the diferric tyrosyl radical cofactor of ribonucleotide reductase (RNR), probably by providing electrons for reduction during radical cofactor maturation in the catalytic small subunit RNR2. In Uncinocarpus reesii (strain UAMH 1704), this protein is Fe-S cluster assembly protein DRE2.